Here is a 761-residue protein sequence, read N- to C-terminus: Xaa-Pro dipeptidyl-peptidase (761 aa).

Active-site charge relay system residues include S347, D467, and H497.

This sequence belongs to the peptidase S15 family. Homodimer.

It is found in the cytoplasm. The catalysed reaction is Hydrolyzes Xaa-Pro-|- bonds to release unblocked, N-terminal dipeptides from substrates including Ala-Pro-|-p-nitroanilide and (sequentially) Tyr-Pro-|-Phe-Pro-|-Gly-Pro-|-Ile.. Removes N-terminal dipeptides sequentially from polypeptides having unsubstituted N-termini provided that the penultimate residue is proline. This Streptococcus agalactiae serotype V (strain ATCC BAA-611 / 2603 V/R) protein is Xaa-Pro dipeptidyl-peptidase.